Consider the following 92-residue polypeptide: Regakine-1 (92 aa).

The first 21 residues, 1–21 (MRVSLAALAFLLTLAVLHSEA), serve as a signal peptide directing secretion. Disulfide bonds link cysteine 32-cysteine 56 and cysteine 33-cysteine 72.

This sequence belongs to the intercrine beta (chemokine CC) family. As to expression, plasma serum.

It localises to the secreted. Its function is as follows. Chemotactic activity for neutrophils and lymphocytes. Binds to heparin. The sequence is that of Regakine-1 from Bos taurus (Bovine).